The sequence spans 234 residues: Lipoprotein-releasing system ATP-binding protein LolD (234 aa).

An ABC transporter domain is found at 7–234 (LLCNNLCKKY…QDELTVTGAL (228 aa)). Position 43–50 (43–50 (GSSGSGKS)) interacts with ATP.

The protein belongs to the ABC transporter superfamily. Lipoprotein translocase (TC 3.A.1.125) family. As to quaternary structure, the complex is composed of two ATP-binding proteins (LolD) and two transmembrane proteins (LolC and LolE).

Its subcellular location is the cell inner membrane. Its function is as follows. Part of the ABC transporter complex LolCDE involved in the translocation of mature outer membrane-directed lipoproteins, from the inner membrane to the periplasmic chaperone, LolA. Responsible for the formation of the LolA-lipoprotein complex in an ATP-dependent manner. This chain is Lipoprotein-releasing system ATP-binding protein LolD, found in Photorhabdus laumondii subsp. laumondii (strain DSM 15139 / CIP 105565 / TT01) (Photorhabdus luminescens subsp. laumondii).